A 534-amino-acid chain; its full sequence is Protein TIC 62, chloroplastic (534 aa).

A chloroplast-targeting transit peptide spans 1–64; that stretch reads MPMEVFSLTS…SSSSSSSSIR (64 aa). The segment at 50–83 is disordered; that stretch reads NNRIRSSSSSSSSIRAQASGSTKSSTAEGIPEKT. Over residues 63-76 the composition is skewed to polar residues; it reads IRAQASGSTKSSTA. 91–120 contributes to the NADP(+) binding site; it reads VFVAGATGKVGSRTVRELIKLGFKVRAGVR. The tract at residues 334 to 534 is disordered; that stretch reads PSQRPYIPSP…ASPSPSFRKS (201 aa). A compositionally biased stretch (polar residues) spans 350 to 360; sequence DTATVSNTGPS. Copy 1 of the repeat occupies 387–408; sequence PLSPYTAYDDLKPPSSPSPTKP. The 3 X 22 AA approximate repeats stretch occupies residues 387–532; the sequence is PLSPYTAYDD…PPASPSPSFR (146 aa). The segment covering 421-432 has biased composition (low complexity); it reads PTPISSDTPSSI. Repeat unit 2 spans residues 450-471; sequence SLSPYAAYPDLKPPSSPSPSVP. A compositionally biased stretch (pro residues) spans 460 to 469; it reads LKPPSSPSPS. Residues 495–509 are compositionally biased toward basic and acidic residues; that stretch reads DTPKNEEQHLHEPKS. Copy 3 of the repeat occupies 511–532; sequence PLSPYAMYEDLKPPASPSPSFR.

In terms of assembly, part of the Tic complex. Interacts with TIC40, TIC110 and TIC55. Interacts (via C-terminus) with PETH/FNR.

Its subcellular location is the plastid. It is found in the chloroplast inner membrane. The protein resides in the chloroplast stroma. Functionally, involved in protein precursor import into chloroplasts. Part of the redox regulon consisting of TIC32, TIC 55 and TIC62. Has a NADPH-dependent dehydrogenase activity, but only after preincubation with lipids. This chain is Protein TIC 62, chloroplastic (TIC62), found in Pisum sativum (Garden pea).